A 156-amino-acid chain; its full sequence is Proline dehydrogenase transcriptional activator (156 aa).

Residues 10 to 71 (LDHFDLKILE…VLNPQKLGVD (62 aa)) form the HTH asnC-type domain. The H-T-H motif DNA-binding region spans 29 to 48 (VLQLSKRVGLSKTPCQTRLK).

Functionally, transcriptional activator of the putA gene in response to proline. The polypeptide is Proline dehydrogenase transcriptional activator (putR) (Rhizobium radiobacter (Agrobacterium tumefaciens)).